An 838-amino-acid chain; its full sequence is Probable beta-glucosidase I (838 aa).

N-linked (GlcNAc...) asparagine glycosylation is present at asparagine 197. Residue aspartate 225 is part of the active site. The PA14 domain maps to aspartate 395 to alanine 555. A glycan (N-linked (GlcNAc...) asparagine) is linked at asparagine 493.

The protein belongs to the glycosyl hydrolase 3 family.

Its subcellular location is the secreted. The catalysed reaction is Hydrolysis of terminal, non-reducing beta-D-glucosyl residues with release of beta-D-glucose.. Its pathway is glycan metabolism; cellulose degradation. Its function is as follows. Beta-glucosidases are one of a number of cellulolytic enzymes involved in the degradation of cellulosic biomass. Catalyzes the last step releasing glucose from the inhibitory cellobiose. The chain is Probable beta-glucosidase I (bglI) from Neosartorya fischeri (strain ATCC 1020 / DSM 3700 / CBS 544.65 / FGSC A1164 / JCM 1740 / NRRL 181 / WB 181) (Aspergillus fischerianus).